The chain runs to 272 residues: Hydroxyethylthiazole kinase (272 aa).

Met-62 contributes to the substrate binding site. Positions 138 and 183 each coordinate ATP. Gly-210 contacts substrate.

This sequence belongs to the Thz kinase family. Mg(2+) serves as cofactor.

The enzyme catalyses 5-(2-hydroxyethyl)-4-methylthiazole + ATP = 4-methyl-5-(2-phosphooxyethyl)-thiazole + ADP + H(+). Its pathway is cofactor biosynthesis; thiamine diphosphate biosynthesis; 4-methyl-5-(2-phosphoethyl)-thiazole from 5-(2-hydroxyethyl)-4-methylthiazole: step 1/1. Its function is as follows. Catalyzes the phosphorylation of the hydroxyl group of 4-methyl-5-beta-hydroxyethylthiazole (THZ). The polypeptide is Hydroxyethylthiazole kinase (Dichelobacter nodosus (strain VCS1703A)).